The following is a 406-amino-acid chain: Vacuole membrane protein 1 (406 aa).

Residues Met-1–Gly-22 are disordered. Residues Met-1–Gln-42 lie on the Cytoplasmic side of the membrane. A helical membrane pass occupies residues Ser-43–Ile-63. The Extracellular segment spans residues Asn-64–Arg-76. The chain crosses the membrane as a helical span at residues Met-77–Gly-97. The Cytoplasmic portion of the chain corresponds to Glu-98–Cys-110. The chain crosses the membrane as a helical span at residues Leu-111–Leu-131. Residues His-132 to Asn-250 are Extracellular-facing. Residues Gly-173 to Ile-316 form a VTT domain region. A helical transmembrane segment spans residues Leu-251–Phe-271. Residues Asp-272–Leu-273 lie on the Cytoplasmic side of the membrane. Residues Ala-274–Ile-294 traverse the membrane as a helical segment. The Extracellular portion of the chain corresponds to Gly-295–Leu-306. Residues Phe-307–Ile-327 traverse the membrane as a helical segment. The Cytoplasmic segment spans residues Pro-328 to Trp-363. Residues Leu-364–Ile-384 traverse the membrane as a helical segment. Residues Asn-385–Lys-406 lie on the Extracellular side of the membrane.

The protein belongs to the VMP1 family.

It localises to the endoplasmic reticulum-Golgi intermediate compartment membrane. Its subcellular location is the cell membrane. It is found in the vacuole membrane. The protein localises to the endoplasmic reticulum membrane. The enzyme catalyses a 1,2-diacyl-sn-glycero-3-phospho-L-serine(in) = a 1,2-diacyl-sn-glycero-3-phospho-L-serine(out). It catalyses the reaction cholesterol(in) = cholesterol(out). It carries out the reaction a 1,2-diacyl-sn-glycero-3-phosphocholine(in) = a 1,2-diacyl-sn-glycero-3-phosphocholine(out). The catalysed reaction is a 1,2-diacyl-sn-glycero-3-phosphoethanolamine(in) = a 1,2-diacyl-sn-glycero-3-phosphoethanolamine(out). In terms of biological role, phospholipid scramblase involved in lipid homeostasis and membrane dynamics processes. Has phospholipid scramblase activity toward cholesterol and phosphatidylserine, as well as phosphatidylethanolamine and phosphatidylcholine. Required for autophagosome formation: participates in early stages of autophagosome biogenesis at the endoplasmic reticulum (ER) membrane by reequilibrating the leaflets of the ER as lipids are extracted by atg2 (atg2a or atg2b) to mediate autophagosome assembly. In addition to autophagy, involved in other processes in which phospholipid scramblase activity is required. Modulates ER contacts with lipid droplets, mitochondria and endosomes. The chain is Vacuole membrane protein 1 from Xenopus laevis (African clawed frog).